The following is a 364-amino-acid chain: Flagellar P-ring protein (364 aa).

Residues 1-21 form the signal peptide; sequence MNVFKVFCLMVLLGWQLPAMA.

It belongs to the FlgI family. As to quaternary structure, the basal body constitutes a major portion of the flagellar organelle and consists of four rings (L,P,S, and M) mounted on a central rod.

It is found in the periplasm. Its subcellular location is the bacterial flagellum basal body. In terms of biological role, assembles around the rod to form the L-ring and probably protects the motor/basal body from shearing forces during rotation. This Pseudoalteromonas translucida (strain TAC 125) protein is Flagellar P-ring protein.